The sequence spans 520 residues: Glucose-1-phosphate adenylyltransferase small subunit, chloroplastic (520 aa).

Residues 1 to 71 (MASVSAIGVL…RNPIIVSPKA (71 aa)) constitute a chloroplast transit peptide.

Belongs to the bacterial/plant glucose-1-phosphate adenylyltransferase family. As to quaternary structure, heterotetramer. In terms of tissue distribution, leaves.

The protein resides in the plastid. Its subcellular location is the chloroplast. The catalysed reaction is alpha-D-glucose 1-phosphate + ATP + H(+) = ADP-alpha-D-glucose + diphosphate. It functions in the pathway glycan biosynthesis; starch biosynthesis. Its activity is regulated as follows. Activated by 3'phosphoglycerate, inhibited by orthophosphate. Allosteric regulation. Its function is as follows. This protein plays a role in synthesis of starch. It catalyzes the synthesis of the activated glycosyl donor, ADP-glucose from Glc-1-P and ATP. The chain is Glucose-1-phosphate adenylyltransferase small subunit, chloroplastic (APS1) from Arabidopsis thaliana (Mouse-ear cress).